We begin with the raw amino-acid sequence, 212 residues long: Adenine phosphoribosyltransferase (212 aa).

Belongs to the purine/pyrimidine phosphoribosyltransferase family. As to quaternary structure, homodimer.

Its subcellular location is the cytoplasm. It catalyses the reaction AMP + diphosphate = 5-phospho-alpha-D-ribose 1-diphosphate + adenine. Its pathway is purine metabolism; AMP biosynthesis via salvage pathway; AMP from adenine: step 1/1. Its function is as follows. Catalyzes a salvage reaction resulting in the formation of AMP, that is energically less costly than de novo synthesis. This Mycobacterium tuberculosis (strain CDC 1551 / Oshkosh) protein is Adenine phosphoribosyltransferase.